A 173-amino-acid polypeptide reads, in one-letter code: MPMKGRFPIRRTLQYLSQGDVVFKDSVKVMTVNYNTHGELGEGARKFVFFNIPQIQYKNPWVQIMLFKNMTPTPFLRFYLDSGEQVLVDVETKSNKEIMEHVKKILGKNEETLRRERQEREQLSHPAHFGPRKYCLRECICEVEGQVPCPAVVPLPRELTGKFQAALRAGAQD.

This sequence belongs to the mitochondrion-specific ribosomal protein mS25 family. As to quaternary structure, component of the mitochondrial ribosome small subunit (28S) which comprises a 12S rRNA and about 30 distinct proteins.

It localises to the mitochondrion. In Bos taurus (Bovine), this protein is Small ribosomal subunit protein mS25 (MRPS25).